Consider the following 193-residue polypeptide: Acyl-homoserine-lactone synthase (193 aa).

The protein belongs to the autoinducer synthase family.

The catalysed reaction is a fatty acyl-[ACP] + S-adenosyl-L-methionine = an N-acyl-L-homoserine lactone + S-methyl-5'-thioadenosine + holo-[ACP] + H(+). Required for the synthesis of OHHL (N-(3-oxohexanoyl)-L-homoserine lactone) also known as VAI or N-(beta-ketocaproyl)homoserine lactone or 3-oxo-N-(tetrahydro-2-oxo-3-furanyl)-hexanamide, an autoinducer molecule which binds to LuxR and thus acts in bioluminescence regulation. The sequence is that of Acyl-homoserine-lactone synthase (luxI) from Aliivibrio fischeri (Vibrio fischeri).